The primary structure comprises 1134 residues: Ubinuclein-1 (1134 aa).

2 disordered regions span residues 1–38 (MSEP…HQDC) and 78–98 (LQPG…EKER). Positions 1 to 166 (MSEPHRVQFT…YGGFYINSGT (166 aa)) are sufficient for interaction with HIRA. Basic and acidic residues-rich tracts occupy residues 25 to 38 (RKEE…HQDC) and 81 to 98 (GDKK…EKER). Thr166 carries the post-translational modification Phosphothreonine. Residues 171–220 (QASESEDDFIKEKKKKSPKKRKLKEGGEKIKKKKKDDTYDKEKKSKKSKF) are disordered. Phosphoserine is present on residues Ser173 and Ser175. Positions 182-193 (EKKKKSPKKRKL) are enriched in basic residues. Positions 194–213 (KEGGEKIKKKKKDDTYDKEK) are enriched in basic and acidic residues. An N6-acetyllysine modification is found at Lys222. Residues 253-268 (QKEKEAQKKREEEHKP) are compositionally biased toward basic and acidic residues. 4 disordered regions span residues 253 to 282 (QKEK…LREL), 321 to 358 (SESP…EGLP), 480 to 504 (EEEK…KGGR), and 594 to 660 (PSKI…LEDS). 4 positions are modified to phosphoserine: Ser323, Ser336, Ser338, and Ser493. The stretch at 479 to 542 (LEEEKDKEQR…SQDLERNNKA (64 aa)) forms a coiled coil. 2 stretches are compositionally biased toward basic and acidic residues: residues 480 to 493 (EEEK…RICS) and 598 to 610 (KVKE…DKKV). Residues Ser660 and Ser677 each carry the phosphoserine modification. Disordered stretches follow at residues 712–836 (TEEK…SPTQ) and 852–986 (QGFH…GVAK). Low complexity-rich tracts occupy residues 792–804 (GPQV…GPQV) and 856–891 (PSAP…KPHS). Residues 892–905 (VSSAGSSYKNNPFA) show a composition bias toward polar residues. Residues 906–932 (SSISKHGVSSGSSSSGGTPVQSSVSGS) are compositionally biased toward low complexity. Polar residues predominate over residues 941-950 (SVGQATSRPV). A compositionally biased stretch (gly residues) spans 973-982 (PNGDSSGGTQ). Phosphoserine is present on Ser1025. Residues 1093-1108 (GLHSSPPHAAPLPHAA) are compositionally biased toward low complexity. Positions 1093-1134 (GLHSSPPHAAPLPHAAVPTHIPQSLPGASQLHGKGPAVPRKL) are disordered.

The protein belongs to the ubinuclein family. In terms of assembly, component of a complex that includes at least ASF1A, CABIN1, HIRA, histone H3.3 and UBN1. Interacts with HIRA (via WD repeat domain); the interaction is direct. Interacts with ASF1A, CEBPA, TJP1, TJP2 and TJP3. As to quaternary structure, (Microbial infection) Interacts with Epstein-Barr virus BZLF1. In terms of tissue distribution, ubiquitous. Also expressed in numerous tumors and cancer cell lines.

The protein resides in the nucleus. It is found in the nucleoplasm. It localises to the PML body. The protein localises to the cell junction. Its subcellular location is the tight junction. Acts as a novel regulator of senescence. Involved in the formation of senescence-associated heterochromatin foci (SAHF), which represses expression of proliferation-promoting genes. Binds to proliferation-promoting genes. May be required for replication-independent chromatin assembly. The protein is Ubinuclein-1 (UBN1) of Homo sapiens (Human).